The chain runs to 447 residues: Chromosomal replication initiator protein DnaA (447 aa).

The segment at 1–70 is domain I, interacts with DnaA modulators; it reads MQDFWSKAMD…EEILSEQLGE (70 aa). Residues 70–110 are domain II; that stretch reads EPVTLLFAADPALEKPVASKTQTVTPVQSGGETGDQENFHS. The disordered stretch occupies residues 87-109; the sequence is ASKTQTVTPVQSGGETGDQENFH. The span at 88–99 shows a compositional bias: polar residues; sequence SKTQTVTPVQSG. The domain III, AAA+ region stretch occupies residues 111 to 327; it reads GLDPRYTFDS…GALIRVSAYA (217 aa). Positions 155, 157, 158, and 159 each coordinate ATP. The segment at 328–447 is domain IV, binds dsDNA; the sequence is SLTGKPITMA…LASLKSMLQK (120 aa).

It belongs to the DnaA family. As to quaternary structure, oligomerizes as a right-handed, spiral filament on DNA at oriC.

The protein localises to the cytoplasm. In terms of biological role, plays an essential role in the initiation and regulation of chromosomal replication. ATP-DnaA binds to the origin of replication (oriC) to initiate formation of the DNA replication initiation complex once per cell cycle. Binds the DnaA box (a 9 base pair repeat at the origin) and separates the double-stranded (ds)DNA. Forms a right-handed helical filament on oriC DNA; dsDNA binds to the exterior of the filament while single-stranded (ss)DNA is stabiized in the filament's interior. The ATP-DnaA-oriC complex binds and stabilizes one strand of the AT-rich DNA unwinding element (DUE), permitting loading of DNA polymerase. After initiation quickly degrades to an ADP-DnaA complex that is not apt for DNA replication. Binds acidic phospholipids. The chain is Chromosomal replication initiator protein DnaA from Magnetococcus marinus (strain ATCC BAA-1437 / JCM 17883 / MC-1).